The sequence spans 986 residues: Zinc finger protein 445 (986 aa).

The region spanning 52–134 (RQLFRQLRYH…ALLEELQRDL (83 aa)) is the SCAN box domain. A KRAB domain is found at 219–289 (LTFQDVEVTF…NICTVQLKRD (71 aa)). Glycyl lysine isopeptide (Lys-Gly) (interchain with G-Cter in SUMO2) cross-links involve residues K302, K360, and K385. The segment at 433-460 (QNTGLKENGKDRYGETSRKSWHAHPEHR) is disordered. The span at 439–460 (ENGKDRYGETSRKSWHAHPEHR) shows a compositional bias: basic and acidic residues. 2 C2H2-type zinc fingers span residues 470-492 (FQCR…EKIH) and 498-520 (YQCS…QKTH). A Glycyl lysine isopeptide (Lys-Gly) (interchain with G-Cter in SUMO2) cross-link involves residue K524. 2 consecutive C2H2-type zinc fingers follow at residues 553 to 575 (LHCN…QRIH) and 581 to 604 (YKCT…KLHH). Residue K609 forms a Glycyl lysine isopeptide (Lys-Gly) (interchain with G-Cter in SUMO2) linkage. 2 C2H2-type zinc fingers span residues 634-656 (FPCQ…QRIH) and 662-686 (YQCS…RTQH). Residue K691 forms a Glycyl lysine isopeptide (Lys-Gly) (interchain with G-Cter in SUMO2) linkage. 4 C2H2-type zinc fingers span residues 718–740 (NKCK…ERVH), 746–768 (YQCR…QRKH), 796–818 (FWCQ…KGIH), and 824–846 (FKCN…QRIH). A Glycyl lysine isopeptide (Lys-Gly) (interchain with G-Cter in SUMO2) cross-link involves residue K929. 2 C2H2-type zinc fingers span residues 933–955 (HKCS…KRCH) and 961–983 (FKCI…MKNH).

Belongs to the krueppel C2H2-type zinc-finger protein family.

It is found in the nucleus. In terms of biological role, transcription regulator required to maintain maternal and paternal gene imprinting, a process by which gene expression is restricted in a parent of origin-specific manner by epigenetic modification of genomic DNA and chromatin, including DNA methylation. Acts by controlling DNA methylation during the earliest multicellular stages of development at multiple imprinting control regions (ICRs). Acts together with ZFP57, but ZFP57 plays the predominant role in imprinting maintenance. In contrast, ZNF445 seems to be the major factor in human early embryonic imprinting maintenance. In Mus musculus (Mouse), this protein is Zinc finger protein 445 (Znf445).